Consider the following 80-residue polypeptide: MAFLKKSLFLVLFLGIVSLSICEEEKREGEEEEKQEEENEELSEEELRDRRAWLDKLKSLGKVVGKVGLGVVQNYLNPRQ.

An N-terminal signal peptide occupies residues 1-22 (MAFLKKSLFLVLFLGIVSLSIC). A propeptide spanning residues 23-49 (EEEKREGEEEEKQEEENEELSEEELRD) is cleaved from the precursor.

It belongs to the frog skin active peptide (FSAP) family. Dermaseptin subfamily. Expressed by the skin glands.

Its subcellular location is the secreted. Its function is as follows. Has antibacterial activity. This chain is Raniseptin-4, found in Boana raniceps (Chaco tree frog).